Here is a 626-residue protein sequence, read N- to C-terminus: Alpha terpineol synthase, chloroplastic (626 aa).

The N-terminal 38 residues, 1 to 38 (MALLSVAPLASKSRLHKTLITSAHHLKPSPTTIPTLPV), are a transit peptide targeting the chloroplast. Mg(2+)-binding residues include aspartate 377, aspartate 381, and aspartate 529. The DDXXD motif signature appears at 377–381 (DDIYD).

Belongs to the terpene synthase family. Tpsd subfamily. It depends on Mg(2+) as a cofactor. Mn(2+) serves as cofactor.

It localises to the plastid. The protein localises to the chloroplast. It catalyses the reaction (2E)-geranyl diphosphate + H2O = (S)-alpha-terpineol + diphosphate. The enzyme catalyses (2E)-geranyl diphosphate + H2O = (R)-alpha-terpineol + diphosphate. It carries out the reaction (2E)-geranyl diphosphate + H2O = (2E)-geraniol + diphosphate. The catalysed reaction is (2E)-geranyl diphosphate = terpinolene + diphosphate. It catalyses the reaction (2E)-geranyl diphosphate = (4S)-limonene + diphosphate. It participates in terpene metabolism; oleoresin biosynthesis. It functions in the pathway secondary metabolite biosynthesis; terpenoid biosynthesis. Monoterpene synthase (TPS) involved in the biosynthesis of monoterpene natural products included in conifer oleoresin secretions and volatile emissions; these compounds contribute to biotic and abiotic stress defense against herbivores and pathogens. Catalyzes the conversion of (2E)-geranyl diphosphate (GPP) to (-)-alpha-terpineol, (+)-alpha-terpineol and terpin-4-ol, and, to a lower extent, to geraniol, terpinolene and (-)-limonene. The protein is Alpha terpineol synthase, chloroplastic of Pinus banksiana (Jack pine).